A 495-amino-acid chain; its full sequence is L-arabinose isomerase (495 aa).

Glu305, Glu332, His349, and His448 together coordinate Mn(2+).

It belongs to the arabinose isomerase family. The cofactor is Mn(2+).

The enzyme catalyses beta-L-arabinopyranose = L-ribulose. Its pathway is carbohydrate degradation; L-arabinose degradation via L-ribulose; D-xylulose 5-phosphate from L-arabinose (bacterial route): step 1/3. Its function is as follows. Catalyzes the conversion of L-arabinose to L-ribulose. In Actinobacillus succinogenes (strain ATCC 55618 / DSM 22257 / CCUG 43843 / 130Z), this protein is L-arabinose isomerase.